We begin with the raw amino-acid sequence, 616 residues long: MKYINKLEEWLGGTLFIAIFGILIAQILSRQVFHSPLIWSEELAKLLFVYVGMLGISVAVRKQEHVFIDFLTNLMPEKIRKFTNTFVQLLVFVCIFLFIHFGIRTFNDASFPIDALGGISEKWIFAALPVIAILMMFRFIQAQTINFKTGKSYLPATFFIISAVILFAILFFAPDWFKVLRISNYIKLGSSSVYIALLVWLIIMFIGVPVGWSLFIATLLYFSMTRWNVVNAATEKLVYSLDSFPLLAVPFYILTGILMNTGGITERIFNFAKSLLGHYTGGMGHVNIGASLLFSGMSGSALADAGGLGQLEIKAMRDAGYDDDICGGITAASCIIGPLVPPSIAMIIYGVIANESIAKLFIAGFIPGVLITLALMAMNYRIAKKRGYPRTPKATREQLCSSFKQSFWAILTPLLIIGGIFSGLFSPTESAIVAAAYSIIIGKFVYKELTLKTLFNSCIEAMAITGVVALMIMTVTFFGDMIAREQVAMRVADVFVAVADSPLTVLVMINALLLFLGMFIDALALQFLVLPMLIPIAMQFNIDLIFFGVMTTLNMMIGILTPPMGMALFVVARVGNMSVSTVTKGVLPFLIPVFVTLVLITIFPQIITFVPNLLIP.

Positions 1 to 190 (MKYINKLEEW…RISNYIKLGS (190 aa)) are TRAP transporter small permease. 17 helical membrane passes run 9-29 (EWLG…QILS), 36-56 (PLIW…MLGI), 83-103 (TNTF…HFGI), 117-137 (GGIS…LMMF), 153-173 (YLPA…LFFA), 195-215 (IALL…WSLF), 244-264 (FPLL…TGGI), 288-308 (IGAS…AGGL), 332-352 (ASCI…YGVI), 357-377 (IAKL…ALMA), 407-427 (FWAI…LFSP), 431-451 (AIVA…ELTL), 459-479 (IEAM…TFFG), 505-525 (VLVM…ALAL), 527-547 (FLVL…LIFF), 552-572 (TLNM…FVVA), and 587-607 (LPFL…PQII). The segment at 191 to 616 (SSVYIALLVW…ITFVPNLLIP (426 aa)) is TRAP transporter large permease.

The protein in the N-terminal section; belongs to the TRAP transporter small permease family. This sequence in the C-terminal section; belongs to the TRAP transporter large permease family. The complex comprises the extracytoplasmic solute receptor protein SiaP, and the fused transmembrane protein SiaT.

It localises to the cell inner membrane. In terms of biological role, part of the tripartite ATP-independent periplasmic (TRAP) transport system SiaPT involved in the uptake of sialic acid. The sequence is that of Sialic acid TRAP transporter permease protein SiaT (siaT) from Haemophilus influenzae (strain 86-028NP).